Here is a 513-residue protein sequence, read N- to C-terminus: 2,3-bisphosphoglycerate-independent phosphoglycerate mutase (513 aa).

Positions 12 and 62 each coordinate Mn(2+). Ser62 acts as the Phosphoserine intermediate in catalysis. Residues His123, 153–154 (RD), Arg185, Arg191, 261–264 (RSDR), and Lys335 each bind substrate. Asp402, His406, Asp443, His444, and His462 together coordinate Mn(2+).

It belongs to the BPG-independent phosphoglycerate mutase family. In terms of assembly, monomer. Mn(2+) is required as a cofactor.

It catalyses the reaction (2R)-2-phosphoglycerate = (2R)-3-phosphoglycerate. The protein operates within carbohydrate degradation; glycolysis; pyruvate from D-glyceraldehyde 3-phosphate: step 3/5. Catalyzes the interconversion of 2-phosphoglycerate and 3-phosphoglycerate. This Thiobacillus denitrificans (strain ATCC 25259 / T1) protein is 2,3-bisphosphoglycerate-independent phosphoglycerate mutase.